The following is a 141-amino-acid chain: Sec-independent protein translocase protein TatB (141 aa).

The helical transmembrane segment at 1 to 21 (MFGISFSELLLVGLVALLVLG) threads the bilayer. The interval 74 to 141 (EAQKLLAPLT…SPPSETPRNP (68 aa)) is disordered. The span at 89–115 (QETPPPAAESPAPSVPTPPPTSTPAVP) shows a compositional bias: pro residues. A compositionally biased stretch (low complexity) spans 116–129 (PADAAAPPAVAAST). Over residues 130-141 (PPSPPSETPRNP) the composition is skewed to pro residues.

Belongs to the TatB family. The Tat system comprises two distinct complexes: a TatABC complex, containing multiple copies of TatA, TatB and TatC subunits, and a separate TatA complex, containing only TatA subunits. Substrates initially bind to the TatABC complex, which probably triggers association of the separate TatA complex to form the active translocon.

It is found in the cell inner membrane. Its function is as follows. Part of the twin-arginine translocation (Tat) system that transports large folded proteins containing a characteristic twin-arginine motif in their signal peptide across membranes. Together with TatC, TatB is part of a receptor directly interacting with Tat signal peptides. TatB may form an oligomeric binding site that transiently accommodates folded Tat precursor proteins before their translocation. This chain is Sec-independent protein translocase protein TatB, found in Pseudomonas aeruginosa (strain ATCC 15692 / DSM 22644 / CIP 104116 / JCM 14847 / LMG 12228 / 1C / PRS 101 / PAO1).